A 205-amino-acid chain; its full sequence is Ribosome maturation factor RimP (205 aa).

Belongs to the RimP family.

It localises to the cytoplasm. In terms of biological role, required for maturation of 30S ribosomal subunits. The polypeptide is Ribosome maturation factor RimP (Sinorhizobium medicae (strain WSM419) (Ensifer medicae)).